Reading from the N-terminus, the 137-residue chain is Profilin-3 (137 aa).

The protein belongs to the profilin family. In terms of assembly, interacts with ACTRT3. Testis specific.

The protein resides in the cytoplasm. It is found in the cytoskeleton. It localises to the nucleus. Functionally, binds to actin and affects the structure of the cytoskeleton. Slightly reduces actin polymerization. Binds to poly-L-proline, phosphatidylinositol 3-phosphate (PtdIns(3)P), phosphatidylinositol 4,5-bisphosphate (PtdIns(4,5)P2) and phosphatidylinositol 4-phosphate (PtdIns(4)P). May be involved in spermatogenesis. This chain is Profilin-3 (PFN3), found in Homo sapiens (Human).